Consider the following 99-residue polypeptide: MSNTISEKIVLMRKSEYLSRQQLADLTGVPYGTLSYYESGRSTPPTDVMMNILQTPQFTKYTLWFMTNQIAPEFGQIAPALAHFGQNETTSPHSGQKTG.

The 55-residue stretch at 9–63 (IVLMRKSEYLSRQQLADLTGVPYGTLSYYESGRSTPPTDVMMNILQTPQFTKYTL) folds into the HTH cro/C1-type domain. The H-T-H motif DNA-binding region spans 20-39 (RQQLADLTGVPYGTLSYYES).

The protein is Repressor protein C (C) of Enterobacteriaceae (Bacteriophage P2).